Consider the following 231-residue polypeptide: Ion-translocating oxidoreductase complex subunit E (231 aa).

The next 6 membrane-spanning stretches (helical) occupy residues A18–A38, L39–L59, T63–V83, L86–V106, A125–L145, and P182–G202.

Belongs to the NqrDE/RnfAE family. The complex is composed of six subunits: RsxA, RsxB, RsxC, RsxD, RsxE and RsxG.

The protein resides in the cell inner membrane. In terms of biological role, part of a membrane-bound complex that couples electron transfer with translocation of ions across the membrane. Required to maintain the reduced state of SoxR. The sequence is that of Ion-translocating oxidoreductase complex subunit E from Escherichia coli (strain SE11).